A 491-amino-acid chain; its full sequence is 2-aminomuconic 6-semialdehyde dehydrogenase (491 aa).

Active-site residues include glutamate 252 and cysteine 286.

This sequence belongs to the aldehyde dehydrogenase family. In terms of assembly, homotrimer.

The enzyme catalyses 2-aminomuconate 6-semialdehyde + NAD(+) + H2O = (2Z,4E)-2-aminomuconate + NADH + 2 H(+). With respect to regulation, strongly inhibited by Ag(+) and Hg(+), and comnpletely inhibited by p-chloromercuribenzoic acid. In terms of biological role, involved in the modified meta-cleavage pathway for 2-aminophenol catabolism. The enzyme is also active toward 2-hydroxymuconic 6-semialdehyde, acetaldehyde, propionaldehyde, and butyraldehyde. This is 2-aminomuconic 6-semialdehyde dehydrogenase (amnC) from Pseudomonas sp.